A 238-amino-acid chain; its full sequence is Uridylate kinase (238 aa).

12-15 (KLSG) provides a ligand contact to ATP. Position 54 (glycine 54) interacts with UMP. ATP contacts are provided by glycine 55 and arginine 59. Residues aspartate 74 and 135 to 142 (VGAPYFTT) contribute to the UMP site. 3 residues coordinate ATP: threonine 162, tyrosine 168, and aspartate 171.

The protein belongs to the UMP kinase family. Homohexamer.

It localises to the cytoplasm. The enzyme catalyses UMP + ATP = UDP + ADP. It functions in the pathway pyrimidine metabolism; CTP biosynthesis via de novo pathway; UDP from UMP (UMPK route): step 1/1. Inhibited by UTP. Catalyzes the reversible phosphorylation of UMP to UDP. In Erythrobacter litoralis (strain HTCC2594), this protein is Uridylate kinase.